The following is a 902-amino-acid chain: Alanine--tRNA ligase (902 aa).

Residues histidine 567, histidine 571, cysteine 671, and histidine 675 each coordinate Zn(2+).

This sequence belongs to the class-II aminoacyl-tRNA synthetase family. Zn(2+) is required as a cofactor.

It is found in the cytoplasm. The enzyme catalyses tRNA(Ala) + L-alanine + ATP = L-alanyl-tRNA(Ala) + AMP + diphosphate. Catalyzes the attachment of alanine to tRNA(Ala) in a two-step reaction: alanine is first activated by ATP to form Ala-AMP and then transferred to the acceptor end of tRNA(Ala). Also edits incorrectly charged Ser-tRNA(Ala) and Gly-tRNA(Ala) via its editing domain. The polypeptide is Alanine--tRNA ligase (Mycoplasmoides gallisepticum (strain R(low / passage 15 / clone 2)) (Mycoplasma gallisepticum)).